Here is an 865-residue protein sequence, read N- to C-terminus: Protein fluG (865 aa).

A GS beta-grasp domain is found at 442-533 (PGVKYVWTQF…VMTWWKSEQG (92 aa)). Positions 540–865 (PRTNLLNINN…ARRKWLVERY (326 aa)) constitute a GS catalytic domain.

The protein belongs to the glutamine synthetase family.

The protein resides in the cytoplasm. Its function is as follows. May function as a GSI-related enzyme in synthesizing a small diffusible factor that acts as an extracellular signal directing asexual sporulation and perhaps other aspects of colony growth. May be involved in brlA activation (an early transcriptional regulator for conidiation specific gene). This chain is Protein fluG (fluG), found in Emericella nidulans (strain FGSC A4 / ATCC 38163 / CBS 112.46 / NRRL 194 / M139) (Aspergillus nidulans).